The following is a 151-amino-acid chain: Proline-rich acidic protein 1 (151 aa).

The N-terminal stretch at Met-1 to Ala-20 is a signal peptide. The interval Leu-71 to Gln-151 is disordered.

In terms of assembly, interacts with isoform 1 and isoform 3 of MAD1L1. Interacts with MTTP. In terms of tissue distribution, highly expressed in the intestinal epithelial cells (at protein level). Abundantly expressed in the epithelial cells of the liver, kidney and cervix. Significantly down-regulated in hepatocellular carcinoma and right colon adenocarcinoma compared with the respective adjacent normal tissues. Expressed in epididymis (at protein level).

The protein resides in the secreted. The protein localises to the endoplasmic reticulum. Functionally, lipid-binding protein which promotes lipid absorption by facilitating MTTP-mediated lipid transfer (mainly triglycerides and phospholipids) and MTTP-mediated apoB lipoprotein assembly and secretion. Protects the gastrointestinal epithelium from irradiation-induced apoptosis. May play an important role in maintaining normal growth homeostasis in epithelial cells. Involved in p53/TP53-dependent cell survival after DNA damage. May down-regulate the expression of MAD1L1 and exert a suppressive role in mitotic spindle assembly checkpoint in hepatocellular carcinomas. This is Proline-rich acidic protein 1 (PRAP1) from Homo sapiens (Human).